The chain runs to 782 residues: MGKRDRVDRDKKKSKKRQYEEEEEDEDDAPGNESQEAVPSAAGKQVDESSTKVDEYGAKDYRQQMPLKGDHTSRPLWVAPDGHIFLEAFSPVYKYAQDFLVAIAEPVCRPTHVHEYKLTAYSLYAAVSVGLQTSDITEYLRKLSKTGVPDGIIQFIKLCTVSYGKVKLVLKHNRYFVESSHPDVIQHLLQDPVIRECRLRNAEGEATELITETFTSKSAISKTVEGSGGASTSQGVDAQAKSDIPKDLFDFYEQMDKDEEEEEETQTVSFEVKQEMIEELQKRCICLEYPLLAEYDFRNDSLNPDINIDLKPTAVLRPYQEKSLRKMFGNGRARSGVIVLPCGAGKSLVGVTAACTVRKRCLVLGNSAVSVEQWKAQFKMWSTIDDSQICRFTSDAKDKPIGCSIAISTYSMLGHTTKRSWEAERVMEWLKTQEWGLMILDEVHTIPAKMFRRVLTIVQAHCKLGLTATLVREDDKIVDLNFLIGPKLYEANWMELQNNGYIAKVQCAEVWCPMSPEFYREYVAIKTKKRILLYTMNPNKFRACQFLIKFHERRNDKIIVFADNVFALKEYAIRLNKPYIYGPTSQGERMQILQNFKHNPKINTIFISKVGDTSFDLPEANVLIQISSHGGSRRQEAQRLGRVLRAKKGMVAEEYNAFFYSLVSQDTQEMAYSTKRQRFLVDQGYSFKVITKLAGMEEEELAFSTKEEQQQLLQKVLAATDLDAEEEVVAGEFGSRSGQASRRFGTMSSLSGADDTVYMEYHSSRNKASTKHVHPLFKRFRK.

The segment covering 1–11 has biased composition (basic and acidic residues); the sequence is MGKRDRVDRDK. A disordered region spans residues 1 to 52; that stretch reads MGKRDRVDRDKKKSKKRQYEEEEEDEDDAPGNESQEAVPSAAGKQVDESSTK. Residues 6–18 carry the Nuclear localization signal motif; sequence RVDRDKKKSKKRQ. Over residues 20 to 30 the composition is skewed to acidic residues; it reads EEEEEDEDDAP. S34 is subject to Phosphoserine. Residues 328–489 enclose the Helicase ATP-binding domain; sequence FGNGRARSGV…LNFLIGPKLY (162 aa). 341–348 contributes to the ATP binding site; the sequence is PCGAGKSL. The short motif at 442–445 is the DEVH box element; sequence EVHT. Positions 543–703 constitute a Helicase C-terminal domain; sequence ACQFLIKFHE…AGMEEEELAF (161 aa). S686 bears the Phosphoserine mark. Phosphoserine; by CK2 is present on S751.

The protein belongs to the helicase family. RAD25/XPB subfamily. In terms of assembly, component of the 7-subunit TFIIH core complex composed of XPB/ERCC3, XPD/ERCC2, GTF2H1, GTF2H2, GTF2H3, GTF2H4 and GTF2H5, which is active in NER. The core complex associates with the 3-subunit CDK-activating kinase (CAK) module composed of CCNH/cyclin H, CDK7 and MNAT1 to form the 10-subunit holoenzyme (holo-TFIIH) active in transcription. Interacts with PUF60. Interacts with ATF7IP. Interacts with KAT2A; leading to KAT2A recruitment to promoters and acetylation of histones. Part of TBP-based Pol II pre-initiation complex (PIC), in which Pol II core assembles with general transcription factors and other specific initiation factors including GTF2E1, GTF2E2, GTF2F1, GTF2F2, TCEA1, ERCC2, ERCC3, GTF2H2, GTF2H3, GTF2H4, GTF2H5, GTF2A1, GTF2A2, GTF2B and TBP; this large multi-subunit PIC complex mediates DNA unwinding and targets Pol II core to the transcription start site where the first phosphodiester bond forms. Phosphorylation on Ser-751 by CK2 controls the 5'-excision activity of ERCC1-XPF endonuclease; phosphorylated protein inhibits the excision activity and thus NER. Dephosphorylation reactivates the 5'-excision step. Phosphorylation has no effect on transcription or the 3'-5' helicase activity.

It localises to the nucleus. It carries out the reaction Couples ATP hydrolysis with the unwinding of duplex DNA by translocating in the 3'-5' direction.. The enzyme catalyses ATP + H2O = ADP + phosphate + H(+). Phosphorylation on Ser-751 by CK2 controls the 5'-excision activity of ERCC1-XPF endonuclease; phosphorylated protein inhibits the excision activity and thus NER. ATPase activity is stimulated by TFIIH subunit p52 (GTF2H4). DNA translocase activity by this subunit in TFIIH is stimulated by XPA, ERCC5/XPG and XFP plus ERCC1. Functionally, ATP-dependent 3'-5' DNA helicase/translocase; binds dsDNA rather than ssDNA, unzipping it in a translocase rather than classical helicase activity. Component of the general transcription and DNA repair factor IIH (TFIIH) core complex. When complexed to CDK-activating kinase (CAK), involved in RNA transcription by RNA polymerase II. The ATPase activity of XPB/ERCC3, but not its helicase activity, is required for DNA opening; it may wrap around the damaged DNA wedging it open, causing localized melting and twisting that allows XPD/ERCC2 helicase to anchor. The ATP-dependent helicase activity of XPB/ERCC3 may be required for promoter escape. Also involved in transcription-coupled nucleotide excision repair (NER) of damaged DNA. In NER, TFIIH acts by opening DNA around the lesion to allow the excision of the damaged oligonucleotide and its replacement by a new DNA fragment. The structure of the TFIIH transcription complex differs from the NER-TFIIH complex; large movements by XPD/ERCC2 and XPB/ERCC3 are stabilized by XPA. The polypeptide is General transcription and DNA repair factor IIH helicase/translocase subunit XPB (Ercc3) (Rattus norvegicus (Rat)).